A 258-amino-acid polypeptide reads, in one-letter code: Snake venom serine protease 2 (258 aa).

An N-terminal signal peptide occupies residues 1–18; that stretch reads MVLIRVLANLLILQLSYA. Residues 19-24 constitute a propeptide that is removed on maturation; it reads QKSSEL. The Peptidase S1 domain occupies 25–249; the sequence is VFGGRPCNIN…YNDWVQSIIA (225 aa). Intrachain disulfides connect Cys-31/Cys-163, Cys-50/Cys-66, Cys-98/Cys-256, Cys-142/Cys-210, Cys-174/Cys-189, and Cys-200/Cys-225. A glycan (N-linked (GlcNAc...) asparagine) is linked at Asn-44. Residues His-65 and Asp-110 each act as charge relay system in the active site. Asn-122 and Asn-185 each carry an N-linked (GlcNAc...) asparagine glycan. Catalysis depends on Ser-204, which acts as the Charge relay system.

It belongs to the peptidase S1 family. Snake venom subfamily. As to quaternary structure, monomer. As to expression, expressed by the venom gland.

Its subcellular location is the secreted. Its activity is regulated as follows. Inhibited by PMSF at 2 mM concentration but not by EDTA. Snake venom serine protease that may act in the hemostasis system of the prey. Has weak fibrinogen clotting activity. Possesses amidolysis activity towards S-2251 (substrate for plasmin) but has no hydrolytic activity with S-2302 (plasma kallikrein substrate) or S-2238 (thrombin substrate). In Protobothrops jerdonii (Jerdon's pitviper), this protein is Snake venom serine protease 2.